The following is a 204-amino-acid chain: Small ribosomal subunit protein uS4 (204 aa).

The S4 RNA-binding domain maps to 92 to 157 (RRLDALVLRS…KPLFEVAREG (66 aa)).

It belongs to the universal ribosomal protein uS4 family. In terms of assembly, part of the 30S ribosomal subunit. Contacts protein S5. The interaction surface between S4 and S5 is involved in control of translational fidelity.

Its function is as follows. One of the primary rRNA binding proteins, it binds directly to 16S rRNA where it nucleates assembly of the body of the 30S subunit. In terms of biological role, with S5 and S12 plays an important role in translational accuracy. The chain is Small ribosomal subunit protein uS4 from Streptomyces avermitilis (strain ATCC 31267 / DSM 46492 / JCM 5070 / NBRC 14893 / NCIMB 12804 / NRRL 8165 / MA-4680).